A 1382-amino-acid polypeptide reads, in one-letter code: ABC-type transporter atr1 (1382 aa).

Residues 1–12 show a composition bias toward basic and acidic residues; that stretch reads MRFRSDSRADHQ. The interval 1-56 is disordered; that stretch reads MRFRSDSRADHQHPKKQGSMDPDTIQALKYQDRSSSSSSNNKPKEKVGSASTSPSP. Asparagine 62 carries N-linked (GlcNAc...) asparagine glycosylation. A run of 6 helical transmembrane segments spans residues 101 to 121, 159 to 179, 233 to 253, 259 to 279, 339 to 359, and 374 to 394; these read LFGTGMAIAAGAAQPLMNIFI, LILLYLGIGMFFASMLYMAVF, LPMAIMYFSTFVTAAAVAFAF, LVLLPIAPLILLAGGVMGALT, GVGVGALLFIIYAGYALAFFY, and IVSVVFANFAGAFAIANLFSM. The ABC transmembrane type-1 1 domain maps to 101 to 400; sequence LFGTGMAIAA…LFSMIENFTM (300 aa). An N-linked (GlcNAc...) asparagine glycan is attached at asparagine 397. The region spanning 445 to 688 is the ABC transporter 1 domain; it reads LKLDHVHFAY…PNGTFASMLR (244 aa). Residue 480–487 participates in ATP binding; sequence GLSGSGKS. The N-linked (GlcNAc...) asparagine glycan is linked to asparagine 680. The disordered stretch occupies residues 738–768; it reads SVKPKDPSKNFEPPGESYASPAADGVKQDAP. The ABC transmembrane type-1 2 domain maps to 797-1094; that stretch reads LGSLCAAIIG…IFNYSADFSS (298 aa). Residues 800-820 form a helical membrane-spanning segment; the sequence is LCAAIIGAVYPVYAILFGTAI. N-linked (GlcNAc...) asparagine glycosylation occurs at asparagine 827. Residues 848–868 traverse the membrane as a helical segment; the sequence is ISSGSFFIVAVGCAFISFYHV. Asparagine 903 is a glycosylation site (N-linked (GlcNAc...) asparagine). 2 helical membrane-spanning segments follow: residues 911 to 931 and 951 to 973; these read SLSVLSQGIYGGVGPTLGSIV and LALVVIASTPLTITAGLLRLRVL. Asparagine 1020 is a glycosylation site (N-linked (GlcNAc...) asparagine). The next 2 membrane-spanning stretches (helical) occupy residues 1034-1054 and 1067-1087; these read VLFGLSQCVQLLVTALAFWYG and GFFTILISVVYGSVQAGNIFN. Positions 1136 to 1377 constitute an ABC transporter 2 domain; the sequence is IALKEVTFRY…DGLFALMARL (242 aa). Position 1171–1178 (1171–1178) interacts with ATP; the sequence is GGSGSGKS. Asparagine 1324 carries N-linked (GlcNAc...) asparagine glycosylation.

It belongs to the ABC transporter superfamily. ABCB family. Multidrug resistance exporter (TC 3.A.1.201) subfamily.

It localises to the cell membrane. In terms of biological role, ABC-type transporter; part of the gene cluster that mediates the biosynthesis of the glycolipid biosurfactant ustilagic acid (UA). UA is a secreted cellobiose glycolipid that is toxic for many microorganisms and confers biocontrol activity to U.maydis. Export of UA is presumably catalyzed by the ABC transporter atr1. Atr1 appears to be quite unspecific, as many of the UA derivatives produced by cluster mutant strains are readily exported. In Mycosarcoma maydis (Corn smut fungus), this protein is ABC-type transporter atr1.